Here is a 291-residue protein sequence, read N- to C-terminus: Small ribosomal subunit protein uS2 (291 aa).

The interval 254-291 is disordered; that stretch reads RTSNRDNKNNKNNNNTDNTDNAASIKEEDLIGGSNNEN. Over residues 263–277 the composition is skewed to low complexity; the sequence is NKNNNNTDNTDNAAS.

It belongs to the universal ribosomal protein uS2 family.

This chain is Small ribosomal subunit protein uS2, found in Ehrlichia canis (strain Jake).